Here is a 52-residue protein sequence, read N- to C-terminus: MAVPKKRTSISKKRIRKKIWKRKGYWTSLKAFSLGKSLSTGNSKSFFVQQKN.

Belongs to the bacterial ribosomal protein bL32 family.

The protein localises to the plastid. The protein resides in the chloroplast. The chain is Large ribosomal subunit protein bL32c from Lobularia maritima (Sweet alyssum).